We begin with the raw amino-acid sequence, 34 residues long: uncharacterized protein (34 aa).

The chain crosses the membrane as a helical span at residues 10–30 (LIITSSFFAIAVVLVLSVLLI).

The protein localises to the membrane. This is an uncharacterized protein from Escherichia coli O157:H7.